Reading from the N-terminus, the 156-residue chain is Small ribosomal subunit protein uS7 (156 aa).

It belongs to the universal ribosomal protein uS7 family. In terms of assembly, part of the 30S ribosomal subunit. Contacts proteins S9 and S11.

Its function is as follows. One of the primary rRNA binding proteins, it binds directly to 16S rRNA where it nucleates assembly of the head domain of the 30S subunit. Is located at the subunit interface close to the decoding center, probably blocks exit of the E-site tRNA. The protein is Small ribosomal subunit protein uS7 of Brevibacillus brevis (strain 47 / JCM 6285 / NBRC 100599).